The primary structure comprises 64 residues: Conotoxin Im11.1 (64 aa).

An N-terminal signal peptide occupies residues 1–26 (MMFRLTSVSCFLLVIACLNLVVLTNA). Disulfide bonds link cysteine 27–cysteine 41, cysteine 34–cysteine 46, cysteine 40–cysteine 50, and cysteine 45–cysteine 54. Asparagine 57 carries the post-translational modification Asparagine amide. Positions 61–64 (ATFQ) are excised as a propeptide.

This sequence belongs to the conotoxin I2 superfamily. In terms of tissue distribution, expressed by the venom duct.

It localises to the secreted. In Conus imperialis (Imperial cone), this protein is Conotoxin Im11.1.